The chain runs to 322 residues: tRNA U34 carboxymethyltransferase (322 aa).

Carboxy-S-adenosyl-L-methionine is bound by residues K90, W104, K109, G129, 151 to 153 (DPT), 179 to 180 (ME), M195, Y199, and R314.

The protein belongs to the class I-like SAM-binding methyltransferase superfamily. CmoB family. In terms of assembly, homotetramer.

The catalysed reaction is carboxy-S-adenosyl-L-methionine + 5-hydroxyuridine(34) in tRNA = 5-carboxymethoxyuridine(34) in tRNA + S-adenosyl-L-homocysteine + H(+). Functionally, catalyzes carboxymethyl transfer from carboxy-S-adenosyl-L-methionine (Cx-SAM) to 5-hydroxyuridine (ho5U) to form 5-carboxymethoxyuridine (cmo5U) at position 34 in tRNAs. The chain is tRNA U34 carboxymethyltransferase from Alcanivorax borkumensis (strain ATCC 700651 / DSM 11573 / NCIMB 13689 / SK2).